The following is a 585-amino-acid chain: MLHRHGSKQKNFENIAGKVVHDLAGLQLLSNDVQKSAVQSGHQGSNNMRDTSSQGMANKYSVPKKGLPADLSYQLIHNELTLDGNPHLNLASFVNTFTTDQARKLIDENLTKNLADNDEYPQLIELTQRCISMLAQLWHANPDEEPIGCATTGSSEAIMLGGLAMKKRWEHRMKNAGKDASKPNIIMSSACQVALEKFTRYFEVECRLVPVSHRSHHMLDPESLWDYVDENTIGCFVILGTTYTGHLENVEKVADVLSQIEAKHPDWSNTDIPIHADGASGGFIIPFGFEKEHMKAYGMERWGFNHPRVVSMNTSGHKFGLTTPGLGWVLWRDESLLADELRFKLKYLGGVEETFGLNFSRPGFQVVHQYFNFVSLGHSGYRTQFQNSLFVARAFSFELLNSSKLPGCFEIVSSIHESIENDSAPKSVKDYWEHPQAYKPGVPLVAFKLSKKFHEEYPEVPQAILSSLLRGRGWIIPNYPLPKATDGSDEKEVLRVVFRSEMKLDLAQLLIVDIESILTKLIHSYEKVCHHIELASEQTPERKSSFIYEMLLALASPQDDIPTPDEIEKKNKLKETTTRNYRGTC.

Residues 35 to 56 show a composition bias toward polar residues; it reads KSAVQSGHQGSNNMRDTSSQGM. Residues 35-60 form a disordered region; the sequence is KSAVQSGHQGSNNMRDTSSQGMANKY. N6-(pyridoxal phosphate)lysine is present on K318.

It belongs to the group II decarboxylase family. Requires pyridoxal 5'-phosphate as cofactor.

It carries out the reaction L-glutamate + H(+) = 4-aminobutanoate + CO2. The chain is Glutamate decarboxylase (GAD1) from Saccharomyces cerevisiae (strain ATCC 204508 / S288c) (Baker's yeast).